We begin with the raw amino-acid sequence, 327 residues long: Ribose-phosphate pyrophosphokinase (327 aa).

ATP-binding positions include 40-42 (DGE) and 99-100 (RQ). Mg(2+) contacts are provided by histidine 134 and aspartate 173. Lysine 196 is a catalytic residue. Residues arginine 198, aspartate 222, and 226–230 (DTANT) contribute to the D-ribose 5-phosphate site.

This sequence belongs to the ribose-phosphate pyrophosphokinase family. Class I subfamily. Homohexamer. Mg(2+) is required as a cofactor.

It localises to the cytoplasm. It catalyses the reaction D-ribose 5-phosphate + ATP = 5-phospho-alpha-D-ribose 1-diphosphate + AMP + H(+). It participates in metabolic intermediate biosynthesis; 5-phospho-alpha-D-ribose 1-diphosphate biosynthesis; 5-phospho-alpha-D-ribose 1-diphosphate from D-ribose 5-phosphate (route I): step 1/1. Involved in the biosynthesis of the central metabolite phospho-alpha-D-ribosyl-1-pyrophosphate (PRPP) via the transfer of pyrophosphoryl group from ATP to 1-hydroxyl of ribose-5-phosphate (Rib-5-P). This chain is Ribose-phosphate pyrophosphokinase, found in Neisseria meningitidis serogroup A / serotype 4A (strain DSM 15465 / Z2491).